We begin with the raw amino-acid sequence, 539 residues long: Kynureninase 2 (539 aa).

A disordered region spans residues 60-87 (DGGVAGETKEPRVPNGVSSATKPNGTVN). Residues 75-87 (GVSSATKPNGTVN) are compositionally biased toward polar residues. Pyridoxal 5'-phosphate contacts are provided by residues leucine 171, threonine 172, 199-202 (FPSD), aspartate 290, histidine 293, and tyrosine 315. An N6-(pyridoxal phosphate)lysine modification is found at lysine 316. Gly residues predominate over residues 340–352 (GGGGSGGVGGGRG). The interval 340-363 (GGGGSGGVGGGRGEGGDGDGGDGG) is disordered. Pyridoxal 5'-phosphate is bound by residues tryptophan 379 and asparagine 407.

It belongs to the kynureninase family. Homodimer. Pyridoxal 5'-phosphate serves as cofactor.

Its subcellular location is the cytoplasm. The catalysed reaction is L-kynurenine + H2O = anthranilate + L-alanine + H(+). It carries out the reaction 3-hydroxy-L-kynurenine + H2O = 3-hydroxyanthranilate + L-alanine + H(+). The protein operates within amino-acid degradation; L-kynurenine degradation; L-alanine and anthranilate from L-kynurenine: step 1/1. It participates in cofactor biosynthesis; NAD(+) biosynthesis; quinolinate from L-kynurenine: step 2/3. In terms of biological role, catalyzes the cleavage of L-kynurenine (L-Kyn) and L-3-hydroxykynurenine (L-3OHKyn) into anthranilic acid (AA) and 3-hydroxyanthranilic acid (3-OHAA), respectively. The polypeptide is Kynureninase 2 (Chaetomium globosum (strain ATCC 6205 / CBS 148.51 / DSM 1962 / NBRC 6347 / NRRL 1970) (Soil fungus)).